A 509-amino-acid polypeptide reads, in one-letter code: MRKPTALIILDGFGLREETYGNAVAQAKKPNFDGYWNKFPHTTLTACGEAVGLPEGQMGNSEVGHLNIGAGRIVYQSLTRVNVAIREGEFDKNETFQSAIKSVKEKGTALHLFGLLSDGGVHSHMNHMFALLRLAAKEGVEKVYIHAFLDGRDVGPKTAQSYIDATNEVIKETGVGQFATISGRYYSMDRDKRWDRVEKCYRAMVNGEGPTYKSAEECVEDSYANGIYDEFVLPSVIVNEDNTPVATINDDDAVIFYNFRPDRAIQIARVFTNEDFREFDRGEKVPHIPEFVCMTHFSETVDGYVAFKPMNLDNTLGEVVAQAGLKQLRIAETEKYPHVTFFFSGGREAEFPGEERILINSPKVATYDLKPEMSIYEVTDALVNEIENDKHDVIILNFANCDMVGHSGMMEPTIKAVEATDECLGKVVEAILAKDGVALITADHGNADEELTSEGEPMTAHTTNPVPFIVTKNDVELREDGILGDIAPTMLTLLGVEQPKEMTGKTIIK.

Aspartate 11 provides a ligand contact to Mn(2+). Residue tyrosine 35 is modified to Phosphotyrosine. Serine 61 contributes to the Mn(2+) binding site. Serine 61 functions as the Phosphoserine intermediate in the catalytic mechanism. Substrate-binding positions include histidine 122, 152-153 (RD), arginine 184, arginine 190, 260-263 (RPDR), and lysine 335. Residues aspartate 402, histidine 406, aspartate 443, histidine 444, and histidine 461 each contribute to the Mn(2+) site.

It belongs to the BPG-independent phosphoglycerate mutase family. As to quaternary structure, monomer. Requires Mn(2+) as cofactor.

The enzyme catalyses (2R)-2-phosphoglycerate = (2R)-3-phosphoglycerate. Its pathway is carbohydrate degradation; glycolysis; pyruvate from D-glyceraldehyde 3-phosphate: step 3/5. Essential for rapid growth and for sporulation. Catalyzes the interconversion of 2-phosphoglycerate and 3-phosphoglycerate. This chain is 2,3-bisphosphoglycerate-independent phosphoglycerate mutase, found in Bacillus cereus (strain ATCC 14579 / DSM 31 / CCUG 7414 / JCM 2152 / NBRC 15305 / NCIMB 9373 / NCTC 2599 / NRRL B-3711).